A 572-amino-acid polypeptide reads, in one-letter code: Golgi apyrase (572 aa).

At 1 to 470 (MVRKYGIFID…KHWMRLFPNK (470 aa)) the chain is on the lumenal side. Residue Glu-145 is the Proton acceptor of the active site. The helical transmembrane segment at 471–491 (LFFILSFIFCLFFLFSLVLFG) threads the bilayer. Topologically, residues 492–572 (YDPKRRQRFK…RERTPRSPFP (81 aa)) are cytoplasmic.

This sequence belongs to the GDA1/CD39 NTPase family. Requires Ca(2+) as cofactor. The cofactor is Mg(2+). Mn(2+) serves as cofactor.

It localises to the golgi apparatus. Its subcellular location is the membrane. It catalyses the reaction a ribonucleoside 5'-triphosphate + 2 H2O = a ribonucleoside 5'-phosphate + 2 phosphate + 2 H(+). The protein operates within protein modification; protein glycosylation. Functionally, catalyzes the hydrolysis of phosphoanhydride bonds of nucleoside tri- and di-phosphates. Required for Golgi glycosylation and cell wall integrity. Involved in N-mannosylation of proteins in Golgi. The sequence is that of Golgi apyrase from Schizosaccharomyces pombe (strain 972 / ATCC 24843) (Fission yeast).